The sequence spans 628 residues: Huntingtin-associated protein 1 (628 aa).

Disordered regions lie at residues 1 to 62 (MRPK…TKTG) and 212 to 264 (YSDS…AHRC). Residues 32–44 (GPAPEPSAEPKPA) show a composition bias toward pro residues. Over residues 52–62 (GQKSGSRTKTG) the composition is skewed to polar residues. Positions 79–403 (RYVFQGPYGP…EDGKSHRQRS (325 aa)) constitute an HAP1 N-terminal domain. The sufficient for interaction with KIF5B stretch occupies residues 152–319 (LLEEKERDLN…SEASQQMAEL (168 aa)). Positions 157–261 (ERDLNTAARI…PKPHPKAETA (105 aa)) are interaction with TBP. Coiled-coil stretches lie at residues 168-301 (QSLV…EQML) and 327-367 (LEGY…MLAS). Over residues 214–235 (DSDDDDDEEDEEDEEEGEEEER) the composition is skewed to acidic residues. The segment covering 236-248 (EGQRDQDQQHDHP) has biased composition (basic and acidic residues). Residues 276–444 (LLEEENDHLR…TSLRKFITDP (169 aa)) are sufficient for self-association and interaction with HD. Disordered regions lie at residues 372–411 (HSES…GSVT), 451–529 (RDTH…VDET), and 562–628 (QDAH…SGAT). 2 stretches are compositionally biased toward basic and acidic residues: residues 387–398 (SRPRDRQEDGKS) and 451–464 (RDTH…KEQR). The interval 473 to 582 (DLKPPEDFEA…KVVPKDSPTP (110 aa)) is interaction with TBP. 2 stretches are compositionally biased toward acidic residues: residues 479–494 (DFEA…ELGA) and 504–527 (GQAE…PEVD). The residue at position 598 (R598) is a Phosphothreonine. Over residues 605–622 (QRLEEDRATHSPSAREEE) the composition is skewed to basic and acidic residues.

As to quaternary structure, self-associates. Interacts with HTT/huntingtin; enhanced by an expanded polyglutamine repeat within HTT. Isoform A interacts with DCTN1; decreased in presence of HTT with expanded polyglutamine repeat; decreased by phosphorylation of Hap1 isoform A at Thr-598. Isoform A interacts with KLC2; decreased by phosphorylation of Hap1 isoform A at Thr-598. Isoform A interacts with ITPR1 and APP. Isoform A interacts with AR; decreased by an expanded polyglutamine repeat within AR. Isoform A interacts with YWHAZ; enhanced by phosphorylation of Hap1 isoform A at Thr-598. Isoform A interacts with BDNF and SORT1; probably forming a complex involved in proBDNF trafficking, degradation and processing. Interacts with TBP, AHI1, HGS and KALRN. Interacts with KIF5A, KIF5B, KIF5C and GABRB3; indicative for an HAP1:KIF5 complex transporting a GABA(A) receptor as cargo. Interacts with ATXN3; in STBs. Interacts with NTRK2; HAP1 stabilizes association of NTRK2 with SORT1 preventing NTRK2 degradation. Interacts with CFAP263. Post-translationally, isoform A is phosphorylated on Thr-598.

It localises to the cytoplasm. The protein localises to the presynapse. Its subcellular location is the cytoskeleton. The protein resides in the cell projection. It is found in the dendritic spine. It localises to the dendrite. The protein localises to the axon. Its subcellular location is the lysosome. The protein resides in the endoplasmic reticulum. It is found in the mitochondrion. It localises to the nucleus. The protein localises to the cytoplasmic vesicle. Its subcellular location is the autophagosome. The protein resides in the early endosome. It is found in the growth cone. It localises to the neuron projection. The protein localises to the secretory vesicle. Its subcellular location is the synaptic vesicle. Its function is as follows. Originally identified as neuronal protein that specifically associates with HTT/huntingtin and the binding is enhanced by an expanded polyglutamine repeat within HTT possibly affecting HAP1 interaction properties. Both HTT and HAP1 are involved in intracellular trafficking and HAP1 is proposed to link HTT to motor proteins and/or transport cargos. Seems to play a role in vesicular transport within neurons and axons such as from early endosomes to late endocytic compartments and to promote neurite outgrowth. The vesicular transport function via association with microtubule-dependent transporters can be attenuated by association with mutant HTT. Involved in the axonal transport of BDNF and its activity-dependent secretion; the function seems to involve HTT, DCTN1 and a complex with SORT1. Involved in APP trafficking and seems to facilitate APP anterograde transport and membrane insertion thereby possibly reducing processing into amyloid beta. Involved in delivery of gamma-aminobutyric acid (GABA(A)) receptors to synapses; the function is dependent on kinesin motor protein KIF5 and is disrupted by HTT with expanded polyglutamine repeat. Involved in regulation of autophagosome motility by promoting efficient retrograde axonal transport. Seems to be involved in regulation of membrane receptor recycling and degradation, and respective signal transduction, including GABA(A) receptors, tyrosine kinase receptors, EGFR, IP3 receptor and androgen receptor. Among others suggested to be involved in control of feeding behavior (involving hypothalamic GABA(A) receptors), cerebellar and brainstem development (involving AHI1 and NTRK1/TrkA), postnatal neurogenesis (involving hypothalamic NTRK2/TrkB regulating the number of Npyr1-expressing cells), and ITPR1/InsP3R1-mediated Ca(2+) release (involving HTT and possibly the effect of mutant HTT). Via association with DCTN1/dynactin p150-glued and HTT/huntingtin involved in cytoplasmic retention of REST in neurons. May be involved in ciliogenesiss; however, reports are conflicting: PubMed:21985783 reports that Hap1 is required for ciliogenesis in primary cortical neurons and proposes that HTT interacts with PCM1 through HAP1; PubMed:23532844 reports that mice with disrupted Hap1 display normal cilium formation and function. Involved in regulation of exocytosis. Isoform A but not isoform B seems to be involved in formation of cytoplasmic inclusion bodies (STBs). In case of anomalous expression of TBP, can sequester a subset of TBP into STBs; sequestration is enhanced by an expanded polyglutamine repeat within TBP. The sequence is that of Huntingtin-associated protein 1 (Hap1) from Mus musculus (Mouse).